The primary structure comprises 374 residues: MDSEAEPPQEKKKPNSCPSFLSLPEEILVNCLARIPKSYYPKLSLVCKSFCSLILSMELYVERLYLGTHEDVLHVCLQLPDRRLPSWFSLWTKPDQTLTNDIGKKKKSTRNTLLVPIPSSYSPRVPMFIGEIGSELYAISKHNTPSSVMWVRDKTSIYAWRKAPSMTVARANVFAYVINGKIYVMGGCAADESKYWAEVFDPKTQTWKPLTDPGAELRVSSIIGMAVSEGKIYVKNSYVKDYVYDPEEDKWDVVASSFMIERKCEIENVLYRFSRQSCSWYDTKHKEWRDIKGLATLNRRRRSSILEVAKYGDKVLILWEIFAKPFYQNKSIWCAVIALEKRKIDEIWGKVKWASIVLTVPRSYVFLRCEVKPV.

One can recognise an F-box domain in the interval 17–63; the sequence is CPSFLSLPEEILVNCLARIPKSYYPKLSLVCKSFCSLILSMELYVER. Kelch repeat units lie at residues 135 to 180, 181 to 227, 231 to 278, and 280 to 308; these read ELYA…VING, KIYV…GMAV, KIYV…RQSC, and WYDT…ILEV.

This Arabidopsis thaliana (Mouse-ear cress) protein is Putative F-box/kelch-repeat protein At4g39756.